A 187-amino-acid polypeptide reads, in one-letter code: Large ribosomal subunit protein uL13 (187 aa).

Belongs to the universal ribosomal protein uL13 family. In terms of assembly, part of the 50S ribosomal subunit.

Functionally, this protein is one of the early assembly proteins of the 50S ribosomal subunit, although it is not seen to bind rRNA by itself. It is important during the early stages of 50S assembly. This chain is Large ribosomal subunit protein uL13, found in Pyrobaculum aerophilum (strain ATCC 51768 / DSM 7523 / JCM 9630 / CIP 104966 / NBRC 100827 / IM2).